The following is a 318-amino-acid chain: DNA-directed RNA polymerase subunit alpha (318 aa).

The alpha N-terminal domain (alpha-NTD) stretch occupies residues 1-227 (MTQFEIECLD…NLFSPLKTID (227 aa)). An alpha C-terminal domain (alpha-CTD) region spans residues 241-318 (HINQILIEEL…KEKTTKIYNK (78 aa)).

It belongs to the RNA polymerase alpha chain family. As to quaternary structure, in plastids the minimal PEP RNA polymerase catalytic core is composed of four subunits: alpha, beta, beta', and beta''. When a (nuclear-encoded) sigma factor is associated with the core the holoenzyme is formed, which can initiate transcription.

The protein localises to the plastid. The protein resides in the chloroplast. It carries out the reaction RNA(n) + a ribonucleoside 5'-triphosphate = RNA(n+1) + diphosphate. Its function is as follows. DNA-dependent RNA polymerase catalyzes the transcription of DNA into RNA using the four ribonucleoside triphosphates as substrates. This Guillardia theta (Cryptophyte) protein is DNA-directed RNA polymerase subunit alpha.